Here is a 109-residue protein sequence, read N- to C-terminus: Matrix protein 2 (109 aa).

Residues 1 to 4 (MLEP) are Virion surface-facing. Residues 5–27 (FQILSICSFILSALHFMAWTIGH) form a helical; Signal-anchor for type III membrane protein membrane-spanning segment. Over 28 to 109 (LNQIKRGVNL…ETVLEVEELQ (82 aa)) the chain is Intravirion. A coiled-coil region spans residues 58-83 (HSYQKEIQAKETMKEVLSDNMEILSD).

In terms of assembly, homotetramer. Post-translationally, phosphorylated by host.

The protein localises to the virion membrane. It localises to the host cell membrane. Functionally, forms presumably a highly low-pH gated proton-selective channel. Trp-23 may function as a minimalistic gate that opens and closes the pore. When the environmental pH is lower than a threshold, the BM2 channel would be activated and selectively transport protons across the membrane from the extracellular side to the cytoplasmic side. Crucial for the uncoating process. When the virion is internalized into the endosome, the channel acidifies the virion's interior, promoting the dissociation of matrix protein 1 (M1) from the ribonucleoprotein (RNP) thus allowing the transport of the RNP from the virion into the cell's nucleus. Also plays a role in viral protein secretory pathway. Elevates the intravesicular pH of normally acidic compartments, such as trans-Golgi network, preventing newly formed hemagglutinin from premature switching to the fusion-active conformation. Plays a crucial role in virion assembly. Expressed in the late phase of the infection. This Influenza B virus (strain B/Ann Arbor/1/1966 [cold-adapted]) protein is Matrix protein 2 (M).